A 242-amino-acid chain; its full sequence is Prosalusin (242 aa).

A signal peptide spans 1-26 (MAAATRSCRPWGSLLGLIWLVSAAAA). A propeptide spanning residues 27-189 (SWDLSSLRCN…SSWVVYGTNY (163 aa)) is cleaved from the precursor. 93–100 (GWTGTGKS) is a binding site for ATP. A glycan (N-linked (GlcNAc...) asparagine) is linked at Asn-149.

Belongs to the ClpA/ClpB family. Torsin subfamily.

Its subcellular location is the secreted. Salusin may be a endocrine and/or paracrine factor able to increase intracellular calcium concentrations and induce cell mitogenesis. Salusin may also be a potent hypotensive peptide. This is Prosalusin (TOR2A) from Bos taurus (Bovine).